Here is a 318-residue protein sequence, read N- to C-terminus: Pantothenate kinase (318 aa).

ATP is bound at residue Gly-96–Ser-103.

The protein belongs to the prokaryotic pantothenate kinase family.

It is found in the cytoplasm. The enzyme catalyses (R)-pantothenate + ATP = (R)-4'-phosphopantothenate + ADP + H(+). It participates in cofactor biosynthesis; coenzyme A biosynthesis; CoA from (R)-pantothenate: step 1/5. This is Pantothenate kinase from Afipia carboxidovorans (strain ATCC 49405 / DSM 1227 / KCTC 32145 / OM5) (Oligotropha carboxidovorans).